Reading from the N-terminus, the 175-residue chain is ATP synthase subunit b (175 aa).

Residues 24-44 (LVLWQIAATVILIIVVRIFLW) form a helical membrane-spanning segment.

The protein belongs to the ATPase B chain family. F-type ATPases have 2 components, F(1) - the catalytic core - and F(0) - the membrane proton channel. F(1) has five subunits: alpha(3), beta(3), gamma(1), delta(1), epsilon(1). F(0) has three main subunits: a(1), b(2) and c(10-14). The alpha and beta chains form an alternating ring which encloses part of the gamma chain. F(1) is attached to F(0) by a central stalk formed by the gamma and epsilon chains, while a peripheral stalk is formed by the delta and b chains.

The protein localises to the cell membrane. Functionally, f(1)F(0) ATP synthase produces ATP from ADP in the presence of a proton or sodium gradient. F-type ATPases consist of two structural domains, F(1) containing the extramembraneous catalytic core and F(0) containing the membrane proton channel, linked together by a central stalk and a peripheral stalk. During catalysis, ATP synthesis in the catalytic domain of F(1) is coupled via a rotary mechanism of the central stalk subunits to proton translocation. In terms of biological role, component of the F(0) channel, it forms part of the peripheral stalk, linking F(1) to F(0). This chain is ATP synthase subunit b, found in Acholeplasma laidlawii (strain PG-8A).